The chain runs to 558 residues: Hsp70-Hsp90 organizing protein 3 (558 aa).

TPR repeat units lie at residues 2–35 (AEEA…SPTN), 37–69 (ILYS…KPDW), 70–103 (SKGY…DPSN), and 136–173 (EKLT…YMKD). An STI1 1 domain is found at 131 to 170 (GKEMWEKLTADPGTRVYLEQDDFVKTMKEIQRNPNNLNLY). A disordered region spans residues 191–232 (SSGEDTEMKEADERKEPEPEMEPMELTEEERQKKERKEKALK). The span at 196–208 (TEMKEADERKEPE) shows a compositional bias: basic and acidic residues. Acidic residues predominate over residues 209 to 218 (PEMEPMELTE). Over residues 219–232 (EERQKKERKEKALK) the composition is skewed to basic and acidic residues. A Bipartite nuclear localization signal motif is present at residues 227–244 (KEKALKEKGEGNVAYKKK). TPR repeat units lie at residues 230–263 (ALKE…DDED), 265–297 (SYLT…GREL), 305–342 (ARAL…HRNP), 369–402 (AEEE…NPND), 404–436 (RAYS…DPSF), and 437–470 (TKGY…DPKN). Residues 507-546 (DPEVQNILSDPVMRQVLVDFQENPKAAQEHMKNPMVMNKI) enclose the STI1 2 domain.

Co-chaperone that forms a complex with HSP70 and HSP90 and preproteins (e.g. chloroplast preproteins). Phosphorylated. Post-translationally, acetylated.

It is found in the cytoplasm. Its subcellular location is the nucleus. Its function is as follows. Mediates the association of the molecular chaperones HSP70 and HSP90. Mediates nuclear encoded chloroplast preproteins binding to HSP90 prior to chloroplastic sorting. Involved in acclimation to heat. This chain is Hsp70-Hsp90 organizing protein 3 (HOP3), found in Arabidopsis thaliana (Mouse-ear cress).